The following is a 702-amino-acid chain: Antigen peptide transporter 2 (702 aa).

Topologically, residues 1 to 6 are lumenal; it reads MALSYL. The helical transmembrane segment at 7–27 threads the bilayer; it reads RPWVSLLLADMALLGLLQGSL. Topologically, residues 28–56 are cytoplasmic; the sequence is GNLLPQGLPGLWIEGTLRLGVLWGLLKVG. A helical transmembrane segment spans residues 57-77; that stretch reads ELLGLVGTLLPLLCLATPLFF. The Lumenal portion of the chain corresponds to 78–98; sequence SLRALVGGTASTSVVRVASAS. The helical transmembrane segment at 99–119 threads the bilayer; that stretch reads WGWLLAGYGAVALSWAVWAVL. Residues 120–147 lie on the Cytoplasmic side of the membrane; the sequence is SPAGVQEKEPGQENRTLMKRLLKLSRPD. The chain crosses the membrane as a helical span at residues 148–168; that stretch reads LPFLIAAFFFLVVAVWGETLI. One can recognise an ABC transmembrane type-1 domain in the interval 151–434; it reads LIAAFFFLVV…LVYMYGDMLS (284 aa). Residues 169–186 are Lumenal-facing; sequence PRYSGRVIDILGGDFDPD. A helical membrane pass occupies residues 187-207; it reads AFASAIFFMCLFSVGSSFSAG. At 208–265 the chain is on the cytoplasmic side; that stretch reads CRGGSFLFTMSRINLRIREQLFSSLLRQDLGFFQETKTGELNSRLSSDTSLMSRWLPF. A helical membrane pass occupies residues 266–286; that stretch reads NANILLRSLVKVVGLYFFMLQ. The Lumenal portion of the chain corresponds to 287 to 292; it reads VSPRLT. The chain crosses the membrane as a helical span at residues 293–313; sequence FLSLLDLPLTIAAEKVYNPRH. Residues 300–388 are part of the peptide-binding site; it reads PLTIAAEKVY…RRVMALGMQV (89 aa). The Cytoplasmic segment spans residues 314–373; sequence QAVLKEIQDAVAKAGQVVREAVGGLQTVRSFGAEEQEVSHYKEALERCRQLWWRRDLEKD. Residues 374 to 394 traverse the membrane as a helical segment; the sequence is VYLVIRRVMALGMQVLILNCG. The Lumenal segment spans residues 395–407; the sequence is VQQILAGEVTRGG. The chain crosses the membrane as a helical span at residues 408–428; that stretch reads LLSFLLYQEEVGQYVRNLVYM. Residues 413 to 432 form a part of the peptide-binding site region; it reads LYQEEVGQYVRNLVYMYGDM. The Cytoplasmic portion of the chain corresponds to 429–702; sequence YGDMLSNVGA…AHLVQQRLEA (274 aa). Residues 467–701 enclose the ABC transporter domain; sequence VEFQDVSFSY…YAHLVQQRLE (235 aa). 502–509 contacts ATP; the sequence is GPNGSGKS.

This sequence belongs to the ABC transporter superfamily. ABCB family. MHC peptide exporter (TC 3.A.1.209) subfamily. As to quaternary structure, heterodimer of TAP1 and TAP2 (TAP1-TAP2). A component of the peptide loading complex (PLC), interacts via TAPBP with MHCI heterodimer; this interaction mediates peptide-MHCI assembly. It depends on Mg(2+) as a cofactor.

The protein localises to the endoplasmic reticulum membrane. The enzyme catalyses a peptide antigen(in) + ATP + H2O = a peptide antigen(out) + ADP + phosphate + H(+). In terms of biological role, ABC transporter associated with antigen processing. In complex with TAP1 mediates unidirectional translocation of peptide antigens from cytosol to endoplasmic reticulum (ER) for loading onto MHC class I (MHCI) molecules. Uses the chemical energy of ATP to export peptides against the concentration gradient. During the transport cycle alternates between 'inward-facing' state with peptide binding site facing the cytosol to 'outward-facing' state with peptide binding site facing the ER lumen. Peptide antigen binding to ATP-loaded TAP1-TAP2 induces a switch to hydrolysis-competent 'outward-facing' conformation ready for peptide loading onto nascent MHCI molecules. Subsequently ATP hydrolysis resets the transporter to the 'inward facing' state for a new cycle. As a component of the peptide loading complex (PLC), acts as a molecular scaffold essential for peptide-MHCI assembly and antigen presentation. The chain is Antigen peptide transporter 2 (Tap2) from Mus musculus (Mouse).